A 594-amino-acid polypeptide reads, in one-letter code: Actin-histidine N-methyltransferase (594 aa).

Positions 1–22 (MGKKSRVKTQKSGTGATATVSP) are disordered. The segment covering 10-20 (QKSGTGATATV) has biased composition (polar residues). S-adenosyl-L-methionine is bound by residues arginine 75, 104-106 (EGF), arginine 254, 275-279 (DMCNH), and 325-327 (SGF). The SET domain maps to 94 to 314 (EGFEMVNFKE…AGDQIYIFYG (221 aa)). Positions 551–594 (GLVNGENLIPNGTRSENESLSPEESENVTGEESSGSMAKVKERL) are disordered.

The protein belongs to the class V-like SAM-binding methyltransferase superfamily. SETD3 actin-histidine methyltransferase family. Interacts with MYOD1. Phosphorylated by GSK3B, which is required for recognition by the SCF(FBXW7) complex and subsequent degradation. In terms of processing, ubiquitinated by the SCF(FBXW7) complex following phosphorylation by GSK3B, leading to its degradation by the proteasome. In terms of tissue distribution, prominently expressed in the heart and skeletal muscles and is also detected weakly in the stomach, small intestine, and colon.

Its subcellular location is the cytoplasm. It is found in the nucleus. It carries out the reaction L-histidyl-[protein] + S-adenosyl-L-methionine = N(tele)-methyl-L-histidyl-[protein] + S-adenosyl-L-homocysteine + H(+). Its function is as follows. Protein-histidine N-methyltransferase that specifically mediates 3-methylhistidine (tele-methylhistidine) methylation of actin at 'His-73'. Histidine methylation of actin is required for smooth muscle contraction of the laboring uterus during delivery. Does not have protein-lysine N-methyltransferase activity and probably only catalyzes histidine methylation of actin. This chain is Actin-histidine N-methyltransferase, found in Mus musculus (Mouse).